Reading from the N-terminus, the 436-residue chain is KICSTOR complex protein kaptin (436 aa).

N-acetylmethionine is present on M1.

Part of the KICSTOR complex composed of KPTN, ITFG2, KICS2 and SZT2. SZT2 probably serves as a link between the other three proteins in the KICSTOR complex and mediates the direct interaction with the GATOR1 complex. May associate with F-actin filaments.

It is found in the lysosome membrane. It localises to the cell projection. The protein localises to the lamellipodium. The protein resides in the stereocilium. Its function is as follows. As part of the KICSTOR complex functions in the amino acid-sensing branch of the TORC1 signaling pathway. Recruits, in an amino acid-independent manner, the GATOR1 complex to the lysosomal membranes and allows its interaction with GATOR2 and the RAG GTPases. Functions upstream of the RAG GTPases and is required to negatively regulate mTORC1 signaling in absence of amino acids. In absence of the KICSTOR complex mTORC1 is constitutively localized to the lysosome and activated. The KICSTOR complex is also probably involved in the regulation of mTORC1 by glucose. The polypeptide is KICSTOR complex protein kaptin (Homo sapiens (Human)).